Consider the following 392-residue polypeptide: Probable tRNA pseudouridine synthase D 1 (392 aa).

The active-site Nucleophile is the Asp92. In terms of domain architecture, TRUD spans 167 to 354; it reads YFLNYYGVQR…FIGDRRAMIG (188 aa).

The protein belongs to the pseudouridine synthase TruD family.

The catalysed reaction is uridine(13) in tRNA = pseudouridine(13) in tRNA. Could be responsible for synthesis of pseudouridine from uracil-13 in transfer RNAs. This Methanocaldococcus jannaschii (strain ATCC 43067 / DSM 2661 / JAL-1 / JCM 10045 / NBRC 100440) (Methanococcus jannaschii) protein is Probable tRNA pseudouridine synthase D 1.